A 310-amino-acid chain; its full sequence is Zinc finger protein 42 homolog (310 aa).

Positions 1 to 15 are enriched in basic residues; it reads MSQQLKKRAKTRHQK. The interval 1–35 is disordered; sequence MSQQLKKRAKTRHQKGLGGRAPSGAKPRQGKSSQD. C2H2-type zinc fingers lie at residues 188-212, 217-239, 245-269, and 275-299; these read IACPQSGCTRKLRNRAALRKHLLIH, HVCAECGKAFVESSKLKRHFLVH, FRCTFEGCGKRFSLDFNLRTHVRIH, and FVCPFQGCNRRFIQSNNLKAHILTH. Residues K231 and K233 each participate in a glycyl lysine isopeptide (Lys-Gly) (interchain with G-Cter in ubiquitin) cross-link.

Belongs to the krueppel C2H2-type zinc-finger protein family. In terms of processing, polyubiquitinated by RNF12, leading to proteasomal degradation. As to expression, expressed in kidney, epidermal keratinocytes, prostate epithelial cells, bronchial and small airway lung epithelial cells (at protein level). Expressed in malignant kidney and several carcinoma cell lines (at protein level). Expressed in embryonic stem cells, kidney, epidermal keratinocytes, prostate epithelial cells, bronchial and small airway lung epithelial cells. Expressed in embryonal carcinomas, seminomas, malignant kidney and several carcinoma cell lines.

It is found in the nucleus. Functionally, involved in the reprogramming of X-chromosome inactivation during the acquisition of pluripotency. Required for efficient elongation of TSIX, a non-coding RNA antisense to XIST. Binds DXPas34 enhancer within the TSIX promoter. Involved in ES cell self-renewal. The polypeptide is Zinc finger protein 42 homolog (ZFP42) (Homo sapiens (Human)).